A 414-amino-acid polypeptide reads, in one-letter code: Voltage-gated ClC-type chloride channel ClcB (414 aa).

The next 11 helical transmembrane spans lie at 5–25, 54–74, 116–136, 147–167, 169–189, 220–240, 255–275, 292–312, 327–347, 353–373, and 381–401; these read LVISIMLGMVSALIVWLFHQA, ALTPALGGLAAGLLLWAYQRY, SAIGREGAMVLLAALFASVFA, LWVACGAAAGMASAYHAPLAG, LFIAEILFGTLMLASLGPVVI, VQYFLMALLGLMAGFSGPLFL, LLPPLQLALGGIIVGLLSLIF, TPPGVLLIGGILICKLLAVLA, LFVGAALGMLCGQIFSLWPVL, LLMALTGMATLLAATTHAPIM, and MTGEYTLLPGLLLSCVIATTI.

It belongs to the chloride channel (TC 2.A.49) family. ClcB subfamily.

It localises to the cell inner membrane. Probably acts as an electrical shunt for an outwardly-directed proton pump that is linked to amino acid decarboxylation, as part of the extreme acid resistance (XAR) response. The chain is Voltage-gated ClC-type chloride channel ClcB from Yersinia pestis.